A 274-amino-acid polypeptide reads, in one-letter code: WIMGHMVNAIEQVDEFLNLGANAIEFDIDFDKDGIAQITHHGIPCDCGRKCTKKAIFTEYLDNIRQVTTPDDPKFREQLVLLALDLKLRRISSAKAYRAGEDVAKKLLDHYWQRGNSKARAYILLNIPLVEDYEFIRAFKDTLKNEGYESYNDKVGINFTGNEDLDKIRDVLEILGIHKQVWQADGITSCFARGTERLKEALKKRDTPGYNYINKVYAWTLVRKSIMRRSLRLGVDGVMSNNPDRVIKVLKEKEFADKFRLATYNDNPWEKFRG.

The active site involves histidine 5. 2 residues coordinate Mg(2+): glutamate 25 and aspartate 27. The active-site Nucleophile is histidine 41. 2 cysteine pairs are disulfide-bonded: cysteine 45–cysteine 51 and cysteine 47–cysteine 190. Residue aspartate 85 coordinates Mg(2+).

It belongs to the arthropod phospholipase D family. Class II subfamily. Mg(2+) serves as cofactor. In terms of tissue distribution, expressed by the venom gland.

It localises to the secreted. It catalyses the reaction an N-(acyl)-sphingosylphosphocholine = an N-(acyl)-sphingosyl-1,3-cyclic phosphate + choline. The enzyme catalyses an N-(acyl)-sphingosylphosphoethanolamine = an N-(acyl)-sphingosyl-1,3-cyclic phosphate + ethanolamine. The catalysed reaction is a 1-acyl-sn-glycero-3-phosphocholine = a 1-acyl-sn-glycero-2,3-cyclic phosphate + choline. It carries out the reaction a 1-acyl-sn-glycero-3-phosphoethanolamine = a 1-acyl-sn-glycero-2,3-cyclic phosphate + ethanolamine. Its function is as follows. Dermonecrotic toxins cleave the phosphodiester linkage between the phosphate and headgroup of certain phospholipids (sphingolipid and lysolipid substrates), forming an alcohol (often choline) and a cyclic phosphate. This toxin acts on sphingomyelin (SM). It may also act on ceramide phosphoethanolamine (CPE), lysophosphatidylcholine (LPC) and lysophosphatidylethanolamine (LPE), but not on lysophosphatidylserine (LPS), and lysophosphatidylglycerol (LPG). It acts by transphosphatidylation, releasing exclusively cyclic phosphate products as second products. Induces dermonecrosis, hemolysis, increased vascular permeability, edema, inflammatory response, and platelet aggregation. The chain is Dermonecrotic toxin SdSicTox-betaIIB1aii from Sicarius cf. damarensis (strain GJB-2008) (Six-eyed sand spider).